The sequence spans 424 residues: CinA-like protein (424 aa).

The protein belongs to the CinA family.

The chain is CinA-like protein from Shewanella halifaxensis (strain HAW-EB4).